A 372-amino-acid polypeptide reads, in one-letter code: Cell division protein FtsZ 1 (372 aa).

GTP is bound by residues 51-55 (GAGCN), 138-140 (GTG), glutamate 169, arginine 173, and aspartate 216. A disordered region spans residues 352–372 (EETPAPSEEETTPVKIDIPEL).

The protein belongs to the FtsZ family. In terms of assembly, homodimer. Polymerizes to form a dynamic ring structure in a strictly GTP-dependent manner. Interacts directly with several other division proteins.

The protein resides in the cytoplasm. Functionally, essential cell division protein that forms a contractile ring structure (Z ring) at the future cell division site. The regulation of the ring assembly controls the timing and the location of cell division. One of the functions of the FtsZ ring is to recruit other cell division proteins to the septum to produce a new cell wall between the dividing cells. Binds GTP and shows GTPase activity. This Pyrococcus horikoshii (strain ATCC 700860 / DSM 12428 / JCM 9974 / NBRC 100139 / OT-3) protein is Cell division protein FtsZ 1.